Consider the following 412-residue polypeptide: Glucose-1-phosphate adenylyltransferase (412 aa).

Residues G169, 184–185 (EK), and S201 contribute to the alpha-D-glucose 1-phosphate site.

This sequence belongs to the bacterial/plant glucose-1-phosphate adenylyltransferase family. As to quaternary structure, homotetramer.

It carries out the reaction alpha-D-glucose 1-phosphate + ATP + H(+) = ADP-alpha-D-glucose + diphosphate. It functions in the pathway glycan biosynthesis; glycogen biosynthesis. Functionally, involved in the biosynthesis of ADP-glucose, a building block required for the elongation reactions to produce glycogen. Catalyzes the reaction between ATP and alpha-D-glucose 1-phosphate (G1P) to produce pyrophosphate and ADP-Glc. This chain is Glucose-1-phosphate adenylyltransferase, found in Geobacter metallireducens (strain ATCC 53774 / DSM 7210 / GS-15).